The sequence spans 64 residues: Large ribosomal subunit protein eL37 (64 aa).

Positions 20, 23, 35, and 38 each coordinate Zn(2+). The segment at 20–38 adopts a C4-type zinc-finger fold; sequence CRRCGRRSFHVRKKVCAAC.

Belongs to the eukaryotic ribosomal protein eL37 family. The cofactor is Zn(2+).

Binds to the 23S rRNA. This chain is Large ribosomal subunit protein eL37, found in Methanococcus maripaludis (strain C5 / ATCC BAA-1333).